A 690-amino-acid chain; its full sequence is Proprotein convertase subtilisin/kexin type 9 (690 aa).

Positions 1 to 28 (MGTVRSRRLWWPLPLLLLLLRGPAGARA) are cleaved as a signal peptide. Positions 29–150 (QEDDDGDYEE…IEEDSYVFAQ (122 aa)) are excised as a propeptide. Residue Y36 is modified to Sulfotyrosine. S45 bears the Phosphoserine mark. The region spanning 75 to 147 (TYVVVLKEET…VDYIEEDSYV (73 aa)) is the Inhibitor I9 domain. The 307-residue stretch at 153–459 (PWNLERITPA…GWQLFCRTVW (307 aa)) folds into the Peptidase S8 domain. Catalysis depends on charge relay system residues D184 and H224. Cystine bridges form between C221–C253 and C321–C356. S384 serves as the catalytic Charge relay system. Residues 448-690 (GAGWQLFCRT…HLAQASQELQ (243 aa)) are C-terminal domain. Intrachain disulfides connect C455–C525, C475–C524, and C484–C507. N531 carries N-linked (GlcNAc...) asparagine glycosylation. 6 disulfides stabilise this stretch: C532–C599, C550–C598, C560–C586, C606–C677, C624–C676, and C633–C652. S686 bears the Phosphoserine mark.

It belongs to the peptidase S8 family. As to quaternary structure, monomer. Can self-associate to form dimers and higher multimers which may have increased LDLR degrading activity. The precursor protein but not the mature protein may form multimers. Interacts with APOB, VLDLR, LRP8/APOER2 and BACE1. The full-length immature form (pro-PCSK9) interacts with SCNN1A, SCNN1B and SCNN1G. The pro-PCSK9 form (via C-terminal domain) interacts with LDLR. Interacts (via the C-terminal domain) with ANXA2 (via repeat Annexin 1); the interaction inhibits the degradation of LDLR. The cofactor is Ca(2+). Post-translationally, cleavage by furin and PCSK5 generates a truncated inactive protein that is unable to induce LDLR degradation. In terms of processing, undergoes autocatalytic cleavage in the endoplasmic reticulum to release the propeptide from the N-terminus and the cleavage of the propeptide is strictly required for its maturation and activation. The cleaved propeptide however remains associated with the catalytic domain through non-covalent interactions, preventing potential substrates from accessing its active site. As a result, it is secreted from cells as a propeptide-containing, enzymatically inactive protein. Phosphorylation protects the propeptide against proteolysis.

It localises to the cytoplasm. It is found in the secreted. The protein localises to the endosome. The protein resides in the lysosome. Its subcellular location is the cell surface. It localises to the endoplasmic reticulum. It is found in the golgi apparatus. Its proteolytic activity is autoinhibited by the non-covalent binding of the propeptide to the catalytic domain. Inhibited by EGTA. Crucial player in the regulation of plasma cholesterol homeostasis. Binds to low-density lipid receptor family members: low density lipoprotein receptor (LDLR), very low density lipoprotein receptor (VLDLR), apolipoprotein E receptor (LRP1/APOER) and apolipoprotein receptor 2 (LRP8/APOER2), and promotes their degradation in intracellular acidic compartments. Acts via a non-proteolytic mechanism to enhance the degradation of the hepatic LDLR through a clathrin LDLRAP1/ARH-mediated pathway. May prevent the recycling of LDLR from endosomes to the cell surface or direct it to lysosomes for degradation. Can induce ubiquitination of LDLR leading to its subsequent degradation. Inhibits intracellular degradation of APOB via the autophagosome/lysosome pathway in a LDLR-independent manner. Involved in the disposal of non-acetylated intermediates of BACE1 in the early secretory pathway. Inhibits epithelial Na(+) channel (ENaC)-mediated Na(+) absorption by reducing ENaC surface expression primarily by increasing its proteasomal degradation. Regulates neuronal apoptosis via modulation of LRP8/APOER2 levels and related anti-apoptotic signaling pathways. The chain is Proprotein convertase subtilisin/kexin type 9 (PCSK9) from Ateles geoffroyi (Black-handed spider monkey).